Reading from the N-terminus, the 630-residue chain is DNA mismatch repair protein MutL (630 aa).

The protein belongs to the DNA mismatch repair MutL/HexB family.

This protein is involved in the repair of mismatches in DNA. It is required for dam-dependent methyl-directed DNA mismatch repair. May act as a 'molecular matchmaker', a protein that promotes the formation of a stable complex between two or more DNA-binding proteins in an ATP-dependent manner without itself being part of a final effector complex. The sequence is that of DNA mismatch repair protein MutL from Lactobacillus johnsonii (strain CNCM I-12250 / La1 / NCC 533).